Consider the following 107-residue polypeptide: Basic phospholipase A2 sphenotoxin subunit B (107 aa).

3 residues coordinate Ca(2+): tyrosine 27, glycine 29, and glycine 31. 5 cysteine pairs are disulfide-bonded: cysteine 28–cysteine 44, cysteine 43–cysteine 91, cysteine 50–cysteine 88, cysteine 57–cysteine 81, and cysteine 75–cysteine 86. Histidine 47 is an active-site residue. Aspartate 48 contacts Ca(2+). Residue aspartate 89 is part of the active site.

The protein belongs to the phospholipase A2 family. Group II subfamily. D49 sub-subfamily. Heterodimer of A and B chains; non-covalently linked. The acidic protein (B chain) has phospholipase A2 activity and the A chain weakly inhibits the B chain enzymatic activity but potentiates its lethal potency. As to expression, expressed by the venom gland.

Its subcellular location is the secreted. It carries out the reaction a 1,2-diacyl-sn-glycero-3-phosphocholine + H2O = a 1-acyl-sn-glycero-3-phosphocholine + a fatty acid + H(+). Functionally, heterodimer A-B: Sphenotoxin is a potent neurotoxin that possesses phospholipase A2 (PLA2) activity. It consists of a non-covalent association of a basic PLA2 subunit B with a non-enzymatic subunit A. Its function is as follows. Monomer B: Not found in vivo. In vitro, potent neurotoxin that possesses phospholipase A2 (PLA2) activity and exerts a lethal action by blocking neuromuscular transmission. Induces paralysis of the hind legs and neuromuscular blockade in mouse phrenic nerve-diaphragm preparations. PLA2 catalyzes the calcium-dependent hydrolysis of the 2-acyl groups in 3-sn-phosphoglycerides. The protein is Basic phospholipase A2 sphenotoxin subunit B of Ophryacus sphenophrys (Broad-horned pitviper).